Reading from the N-terminus, the 278-residue chain is Phosphatidylglycerol--prolipoprotein diacylglyceryl transferase (278 aa).

4 helical membrane passes run 12-32 (FGPLTLRWYGLLIAMAVLIGL), 44-64 (LENGLISDLLPLLVLFSVIGA), 86-106 (IWEGGIAIHGALIAGTLTLIL), and 113-133 (QPFLDVLDVLAPSVALGQAIG). A 1,2-diacyl-sn-glycero-3-phospho-(1'-sn-glycerol) is bound at residue Arg134. 3 consecutive transmembrane segments (helical) span residues 173 to 193 (PTFLYESIWNLLLFVLLLVLF), 203 to 223 (FPAGTLSCVYLIGYSLGRIWI), and 246 to 266 (IAQLMSAMLMVLGGLGLWWLK).

It belongs to the Lgt family.

It localises to the cell inner membrane. It catalyses the reaction L-cysteinyl-[prolipoprotein] + a 1,2-diacyl-sn-glycero-3-phospho-(1'-sn-glycerol) = an S-1,2-diacyl-sn-glyceryl-L-cysteinyl-[prolipoprotein] + sn-glycerol 1-phosphate + H(+). It functions in the pathway protein modification; lipoprotein biosynthesis (diacylglyceryl transfer). Catalyzes the transfer of the diacylglyceryl group from phosphatidylglycerol to the sulfhydryl group of the N-terminal cysteine of a prolipoprotein, the first step in the formation of mature lipoproteins. This chain is Phosphatidylglycerol--prolipoprotein diacylglyceryl transferase, found in Parasynechococcus marenigrum (strain WH8102).